Reading from the N-terminus, the 522-residue chain is Maturase K (522 aa).

The protein belongs to the intron maturase 2 family. MatK subfamily.

Its subcellular location is the plastid. It localises to the chloroplast. In terms of biological role, usually encoded in the trnK tRNA gene intron. Probably assists in splicing its own and other chloroplast group II introns. The sequence is that of Maturase K from Iris sanguinea (Japanese iris).